Reading from the N-terminus, the 312-residue chain is Olfactory receptor 6C1 (312 aa).

Topologically, residues 1 to 23 are extracellular; it reads MRNHTEITEFILLGLTDDPNFQV. An N-linked (GlcNAc...) asparagine glycan is attached at N3. Residues 24–44 form a helical membrane-spanning segment; sequence VIFVFLLITYMLSITGNLTLI. At 45–52 the chain is on the cytoplasmic side; sequence TITLLDSH. The chain crosses the membrane as a helical span at residues 53-73; it reads LQTPMYFFLRNFSILEISFTT. The Extracellular portion of the chain corresponds to 74 to 97; the sequence is VSIPKFLGNIISGDKTISFNNCIV. Residues C95 and C187 are joined by a disulfide bond. Residues 98-118 form a helical membrane-spanning segment; that stretch reads QLFFFILLGVTEFYLLAAMSY. Residues 119–137 are Cytoplasmic-facing; sequence DRYVAICKPLHCLSIMNRR. A helical membrane pass occupies residues 138–158; that stretch reads VCTLLVFTSWLVSFLIIFPAL. Residues 159–195 lie on the Extracellular side of the membrane; the sequence is MLLLKLHYCRSNIIDHFTCDYFPLLQLACSDTKFLEV. The chain crosses the membrane as a helical span at residues 196–215; sequence MGFSCAAFTLMFTLALIFLS. Over 216 to 235 the chain is Cytoplasmic; it reads YIYIIRTILRIPSTSQRTKA. The helical transmembrane segment at 236 to 256 threads the bilayer; that stretch reads FSTCSSHMVVVSISYGSCIFM. Residues 257–269 lie on the Extracellular side of the membrane; sequence YIKPSAKDRVSLS. A helical transmembrane segment spans residues 270–290; sequence KGVAILNTSVAPMMNPFIYSL. Over 291 to 312 the chain is Cytoplasmic; the sequence is RNQQVKQAFINMARKTVFFTST.

Belongs to the G-protein coupled receptor 1 family.

The protein resides in the cell membrane. Its function is as follows. Odorant receptor. This Homo sapiens (Human) protein is Olfactory receptor 6C1 (OR6C1).